We begin with the raw amino-acid sequence, 406 residues long: MKRAIILVLDSFGIGAAGDAEKFGDVGSDTMGHIAEQCDKGLADNGNRKGPLTLPNLSKLGLAMAGKESTGKLAAGLDADAEIIGAYGHAAELSSGKDTPSGHWEIAGVPVLFDWGYFSDKENSFPKELTDRILARANLSGYLGNCHASGTQVLDDLGEEHMKTGMPIFYTSADSVFQIACHEETFGLDNLLTLCQIAREELEDYNIGRVIARPFIGAGKGQFERTGNRRDLSLEPPAITVLQKLVEEKNGHVHSIGKISDIYAGCGITQKTKATGIPALFDATKEAITAASDNTIVFTNFVDFDSAYGHRRDVAGYAAALEYFDGRLPEIMEMLQEDDILILTADHGCDPTWPGTDHTREHIPVLVYGHKVPAGSLGLRDTFADIGQTLAEYFEISDMEYGKSFL.

6 residues coordinate Mn(2+): Asp-10, Asp-305, His-310, Asp-346, His-347, and His-358.

Belongs to the phosphopentomutase family. It depends on Mn(2+) as a cofactor.

Its subcellular location is the cytoplasm. It catalyses the reaction 2-deoxy-alpha-D-ribose 1-phosphate = 2-deoxy-D-ribose 5-phosphate. It carries out the reaction alpha-D-ribose 1-phosphate = D-ribose 5-phosphate. Its pathway is carbohydrate degradation; 2-deoxy-D-ribose 1-phosphate degradation; D-glyceraldehyde 3-phosphate and acetaldehyde from 2-deoxy-alpha-D-ribose 1-phosphate: step 1/2. Isomerase that catalyzes the conversion of deoxy-ribose 1-phosphate (dRib-1-P) and ribose 1-phosphate (Rib-1-P) to deoxy-ribose 5-phosphate (dRib-5-P) and ribose 5-phosphate (Rib-5-P), respectively. The protein is Phosphopentomutase of Aliivibrio salmonicida (strain LFI1238) (Vibrio salmonicida (strain LFI1238)).